The sequence spans 206 residues: MSSDIQDPMAQLVPMVVEQTSKGERSYDIYSRLLKERVIFCCGQVEDHMANLIVAQLLFLESDNPDKDIYLYINSPGGVVTAGMAIYDTMRFIKPDVSTVCMGQAASMGAFLLAGGAQGKRYCLPNSRVMIHQPLGGFQGQASDFEIHAKQILDLKERLNRMLAENTGQDYEKVARDTDRDHFLSAEESIDYGLVDGILRQRGEES.

Ser-107 serves as the catalytic Nucleophile. The active site involves His-132.

The protein belongs to the peptidase S14 family. Fourteen ClpP subunits assemble into 2 heptameric rings which stack back to back to give a disk-like structure with a central cavity, resembling the structure of eukaryotic proteasomes.

The protein localises to the cytoplasm. The enzyme catalyses Hydrolysis of proteins to small peptides in the presence of ATP and magnesium. alpha-casein is the usual test substrate. In the absence of ATP, only oligopeptides shorter than five residues are hydrolyzed (such as succinyl-Leu-Tyr-|-NHMec, and Leu-Tyr-Leu-|-Tyr-Trp, in which cleavage of the -Tyr-|-Leu- and -Tyr-|-Trp bonds also occurs).. In terms of biological role, cleaves peptides in various proteins in a process that requires ATP hydrolysis. Has a chymotrypsin-like activity. Plays a major role in the degradation of misfolded proteins. The sequence is that of ATP-dependent Clp protease proteolytic subunit from Idiomarina loihiensis (strain ATCC BAA-735 / DSM 15497 / L2-TR).